A 699-amino-acid polypeptide reads, in one-letter code: Condensin complex subunit 2 (699 aa).

Disordered regions lie at residues 1-35 (MSTSTPQSGGRRKPETPDSAFLSPATRPQPISAAA) and 176-203 (ESQATEDTENQETDTGPQDGRKNPKRRK).

The protein belongs to the CND2 (condensin subunit 2) family. In terms of assembly, component of the condensin complex, which contains the XCAP-E/SMC2 and XCAP-C/SMC4 heterodimer, and three non SMC subunits that probably regulate the complex: XCAP-H/NCAPH, XCAP-D2/NCAPD2 and XCAP-G/NCAPG. Post-translationally, phosphorylated by CDK1. Its phosphorylation, as well as that of XCAP-D2 and XCAP-G subunits, activates the condensin complex and is required for chromosome condensation.

It is found in the nucleus. It localises to the cytoplasm. The protein localises to the chromosome. Regulatory subunit of the condensin complex, a complex required for conversion of interphase chromatin into mitotic-like condense chromosomes. The condensin complex probably introduces positive supercoils into relaxed DNA in the presence of type I topoisomerases and converts nicked DNA into positive knotted forms in the presence of type II topoisomerase. This is Condensin complex subunit 2 (ncaph) from Xenopus laevis (African clawed frog).